The chain runs to 194 residues: Peptidyl-tRNA hydrolase (194 aa).

Y16 provides a ligand contact to tRNA. Catalysis depends on H21, which acts as the Proton acceptor. Positions 67, 69, and 115 each coordinate tRNA.

The protein belongs to the PTH family. As to quaternary structure, monomer.

The protein localises to the cytoplasm. The enzyme catalyses an N-acyl-L-alpha-aminoacyl-tRNA + H2O = an N-acyl-L-amino acid + a tRNA + H(+). Functionally, hydrolyzes ribosome-free peptidyl-tRNAs (with 1 or more amino acids incorporated), which drop off the ribosome during protein synthesis, or as a result of ribosome stalling. In terms of biological role, catalyzes the release of premature peptidyl moieties from peptidyl-tRNA molecules trapped in stalled 50S ribosomal subunits, and thus maintains levels of free tRNAs and 50S ribosomes. The sequence is that of Peptidyl-tRNA hydrolase from Shigella boydii serotype 18 (strain CDC 3083-94 / BS512).